A 191-amino-acid chain; its full sequence is Lipopolysaccharide export system protein LptC (191 aa).

Residues 7-25 form a helical membrane-spanning segment; it reads WVIIVLSLAVLVMIGINMA.

This sequence belongs to the LptC family. As to quaternary structure, component of the lipopolysaccharide transport and assembly complex. Interacts with LptA and the LptBFG transporter complex.

The protein localises to the cell inner membrane. In terms of biological role, involved in the assembly of lipopolysaccharide (LPS). Required for the translocation of LPS from the inner membrane to the outer membrane. Facilitates the transfer of LPS from the inner membrane to the periplasmic protein LptA. Could be a docking site for LptA. This chain is Lipopolysaccharide export system protein LptC, found in Escherichia coli O157:H7.